Here is a 67-residue protein sequence, read N- to C-terminus: Alpha-conotoxin-like Pu1.1 (67 aa).

Residues methionine 1–serine 21 form the signal peptide. The propeptide occupies phenylalanine 22–arginine 46. Glutamine 47 is modified (pyrrolidone carboxylic acid). 2 disulfides stabilise this stretch: cysteine 49–cysteine 55 and cysteine 50–cysteine 63. The tract at residues asparagine 51–proline 53 is lacks the Ser-Xaa-Pro motif that is crucial for potent interaction with nAChR. Cysteine 63 is modified (cysteine amide).

The protein belongs to the conotoxin A superfamily. In terms of tissue distribution, expressed by the venom duct.

It localises to the secreted. Functionally, alpha-conotoxins act on postsynaptic membranes, they bind to the nicotinic acetylcholine receptors (nAChR) and thus inhibit them. Has possibly a distinct nAChR binding mode from other alpha-conotoxins, due to a different three residue motif (lacks the Ser-Xaa-Pro motif). The protein is Alpha-conotoxin-like Pu1.1 of Conus pulicarius (Flea-bitten cone).